A 235-amino-acid polypeptide reads, in one-letter code: Lipoprotein-releasing system ATP-binding protein LolD (235 aa).

The region spanning 7-234 (LQCTNLSKRY…QQELTLMGAR (228 aa)) is the ABC transporter domain. 43 to 50 (GSSGSGKS) contributes to the ATP binding site.

The protein belongs to the ABC transporter superfamily. Lipoprotein translocase (TC 3.A.1.125) family. As to quaternary structure, the complex is composed of two ATP-binding proteins (LolD) and two transmembrane proteins (LolC and LolE).

Its subcellular location is the cell inner membrane. Part of the ABC transporter complex LolCDE involved in the translocation of mature outer membrane-directed lipoproteins, from the inner membrane to the periplasmic chaperone, LolA. Responsible for the formation of the LolA-lipoprotein complex in an ATP-dependent manner. The polypeptide is Lipoprotein-releasing system ATP-binding protein LolD (Pectobacterium atrosepticum (strain SCRI 1043 / ATCC BAA-672) (Erwinia carotovora subsp. atroseptica)).